Consider the following 41-residue polypeptide: ORF3c protein (41 aa).

Functionally, may play a role in host modulation. The chain is ORF3c protein from Severe acute respiratory syndrome coronavirus 2 (2019-nCoV).